The following is a 490-amino-acid chain: Arginine decarboxylase (490 aa).

At lysine 226 the chain carries N6-(pyridoxal phosphate)lysine.

The protein belongs to the Orn/Lys/Arg decarboxylase class-I family. Pyridoxal 5'-phosphate serves as cofactor.

It is found in the cytoplasm. The enzyme catalyses L-arginine + H(+) = agmatine + CO2. The protein operates within amine and polyamine biosynthesis; agmatine biosynthesis; agmatine from L-arginine: step 1/1. Its function is as follows. Catalyzes the formation of agmatine from arginine. The chain is Arginine decarboxylase (speA) from Bacillus subtilis (strain 168).